The sequence spans 156 residues: Small ribosomal subunit protein uS7 (156 aa).

It belongs to the universal ribosomal protein uS7 family. As to quaternary structure, part of the 30S ribosomal subunit. Contacts proteins S9 and S11.

Functionally, one of the primary rRNA binding proteins, it binds directly to 16S rRNA where it nucleates assembly of the head domain of the 30S subunit. Is located at the subunit interface close to the decoding center, probably blocks exit of the E-site tRNA. The chain is Small ribosomal subunit protein uS7 from Polynucleobacter asymbioticus (strain DSM 18221 / CIP 109841 / QLW-P1DMWA-1) (Polynucleobacter necessarius subsp. asymbioticus).